The following is a 385-amino-acid chain: Heptahelical transmembrane protein 4 (385 aa).

Over residues 1–12 (MGDEAEIKEHLK) the composition is skewed to basic and acidic residues. The tract at residues 1–22 (MGDEAEIKEHLKPQASSETMDK) is disordered. Over 1 to 79 (MGDEAEIKEH…LSIFTIHNET (79 aa)) the chain is Cytoplasmic. The helical transmembrane segment at 80 to 100 (LNVWTHLIGFFLFLALTIYTA) threads the bilayer. Residues 101-191 (TKVPSVVDLH…LIFRPITRWP (91 aa)) are Extracellular-facing. The helical transmembrane segment at 192–212 (FYAFLGGAMFCLLASSTCHLL) threads the bilayer. Over 213-228 (SCHSERVSYIMLRLDY) the chain is Cytoplasmic. A helical transmembrane segment spans residues 229 to 249 (AGIAALIATSFYPPVYYSFMC). Topologically, residues 250 to 256 (DPFFCNL) are extracellular. Residues 257–277 (YLGFITILGIATVLVSLLPVF) traverse the membrane as a helical segment. Residues 278–288 (QSPEFRVVRAS) lie on the Cytoplasmic side of the membrane. A helical membrane pass occupies residues 289–309 (LFFGMGFSGLAPILHKLIIFW). The Extracellular segment spans residues 310 to 313 (DQPE). Residues 314–334 (ALHTTGYEILMGLLYGLGALV) form a helical membrane-spanning segment. The Cytoplasmic segment spans residues 335–356 (YATRIPERWMPGKFDIAGHSHQ). Residues 357–377 (LFHVLVVAGAFTHYRAGLVYL) form a helical membrane-spanning segment.

It belongs to the ADIPOR family. Expressed in roots, leaves, stems and flowers.

It is found in the membrane. Functionally, may play a role in abiotic stress response. In Arabidopsis thaliana (Mouse-ear cress), this protein is Heptahelical transmembrane protein 4 (HHP4).